The primary structure comprises 434 residues: ATP phosphoribosyltransferase regulatory subunit (434 aa).

Positions 1-48 are disordered; it reads MYGRGSGAEHSRGSGAEHFWDPRPEASSTVSSSLRPPSGARDLLPREV. Over residues 27-38 the composition is skewed to low complexity; the sequence is SSTVSSSLRPPS.

Belongs to the class-II aminoacyl-tRNA synthetase family. HisZ subfamily. Heteromultimer composed of HisG and HisZ subunits.

It is found in the cytoplasm. It participates in amino-acid biosynthesis; L-histidine biosynthesis; L-histidine from 5-phospho-alpha-D-ribose 1-diphosphate: step 1/9. Its function is as follows. Required for the first step of histidine biosynthesis. May allow the feedback regulation of ATP phosphoribosyltransferase activity by histidine. The sequence is that of ATP phosphoribosyltransferase regulatory subunit from Synechococcus sp. (strain JA-2-3B'a(2-13)) (Cyanobacteria bacterium Yellowstone B-Prime).